Consider the following 104-residue polypeptide: UPF0145 protein VNG_2432C (104 aa).

The protein belongs to the UPF0145 family.

This is UPF0145 protein VNG_2432C from Halobacterium salinarum (strain ATCC 700922 / JCM 11081 / NRC-1) (Halobacterium halobium).